The chain runs to 312 residues: Pyrimidine-specific ribonucleoside hydrolase RihA (312 aa).

Histidine 240 is a catalytic residue.

Belongs to the IUNH family. RihA subfamily.

Its function is as follows. Hydrolyzes cytidine or uridine to ribose and cytosine or uracil, respectively. This chain is Pyrimidine-specific ribonucleoside hydrolase RihA, found in Shewanella woodyi (strain ATCC 51908 / MS32).